A 261-amino-acid polypeptide reads, in one-letter code: Carnitinyl-CoA dehydratase (261 aa).

E111 functions as the Nucleophile in the catalytic mechanism. E131 serves as the catalytic Proton acceptor.

Belongs to the enoyl-CoA hydratase/isomerase family.

The catalysed reaction is (R)-carnitinyl-CoA = crotonobetainyl-CoA + H2O. The protein operates within amine and polyamine metabolism; carnitine metabolism. Functionally, catalyzes the reversible dehydration of L-carnitinyl-CoA to crotonobetainyl-CoA. The chain is Carnitinyl-CoA dehydratase from Salmonella dublin (strain CT_02021853).